Reading from the N-terminus, the 127-residue chain is Fluoride-specific ion channel FluC (127 aa).

4 consecutive transmembrane segments (helical) span residues 7–27 (LLVA…GAWV), 31–51 (LGAG…FLIG), 68–88 (LFLA…SYET), and 97–117 (VGKA…LAFL). Na(+)-binding residues include Gly76 and Thr79.

The protein belongs to the fluoride channel Fluc/FEX (TC 1.A.43) family.

Its subcellular location is the cell inner membrane. It carries out the reaction fluoride(in) = fluoride(out). Na(+) is not transported, but it plays an essential structural role and its presence is essential for fluoride channel function. Functionally, fluoride-specific ion channel. Important for reducing fluoride concentration in the cell, thus reducing its toxicity. This chain is Fluoride-specific ion channel FluC, found in Thermus thermophilus (strain ATCC BAA-163 / DSM 7039 / HB27).